The sequence spans 277 residues: Urease accessory protein UreD (277 aa).

This sequence belongs to the UreD family. In terms of assembly, ureD, UreF and UreG form a complex that acts as a GTP-hydrolysis-dependent molecular chaperone, activating the urease apoprotein by helping to assemble the nickel containing metallocenter of UreC. The UreE protein probably delivers the nickel.

It localises to the cytoplasm. Required for maturation of urease via the functional incorporation of the urease nickel metallocenter. This Pseudomonas putida (strain GB-1) protein is Urease accessory protein UreD.